The chain runs to 163 residues: Transcriptional repressor NrdR (163 aa).

A zinc finger lies at 3-34 (CVQCGHLEDKVIDSRMSKDGTTIRRRRVCLRC). In terms of domain architecture, ATP-cone spans 49-139 (LRVVKRDNLR…VYRQFSNVEE (91 aa)).

The protein belongs to the NrdR family. It depends on Zn(2+) as a cofactor.

Functionally, negatively regulates transcription of bacterial ribonucleotide reductase nrd genes and operons by binding to NrdR-boxes. The protein is Transcriptional repressor NrdR of Akkermansia muciniphila (strain ATCC BAA-835 / DSM 22959 / JCM 33894 / BCRC 81048 / CCUG 64013 / CIP 107961 / Muc).